A 153-amino-acid polypeptide reads, in one-letter code: Putative nuclear shuttle protein (153 aa).

This sequence belongs to the nanoviridae nuclear shuttle protein family.

It localises to the host nucleus. The protein localises to the host cytoplasm. Putative nuclear shuttle protein. The polypeptide is Putative nuclear shuttle protein (DNA-N) (Trifolium subterraneum (Subterranean clover)).